Consider the following 297-residue polypeptide: Ketohexokinase (297 aa).

4 residues coordinate beta-D-fructose: aspartate 15, glycine 41, asparagine 42, and asparagine 45. Residues arginine 107, 225–228 (AEEG), and 254–257 (GAGD) each bind ATP. Residue aspartate 257 coordinates beta-D-fructose.

The protein belongs to the carbohydrate kinase PfkB family. As to quaternary structure, homodimer.

The catalysed reaction is beta-D-fructose + ATP = beta-D-fructose 1-phosphate + ADP + H(+). It participates in carbohydrate metabolism; fructose metabolism. Its activity is regulated as follows. Requires potassium. Inhibition by ADP. Functionally, catalyzes the phosphorylation of the ketose sugar fructose to fructose-1-phosphate. The polypeptide is Ketohexokinase (KHK) (Pongo abelii (Sumatran orangutan)).